A 210-amino-acid chain; its full sequence is Cell division protein FtsQ (210 aa).

The POTRA domain occupies 1–58; that stretch reads LQTSEIEVFQLLGLDGSTSLIALDIDAARRKLVQLPWVEDVDIRKVYPKTVEVRLKER. Residues 8–25 traverse the membrane as a helical segment; it reads VFQLLGLDGSTSLIALDI.

It belongs to the FtsQ/DivIB family. FtsQ subfamily.

The protein localises to the cell inner membrane. Functionally, essential cell division protein. This chain is Cell division protein FtsQ, found in Rhizobium radiobacter (Agrobacterium tumefaciens).